Here is a 706-residue protein sequence, read N- to C-terminus: Ribosomal RNA large subunit methyltransferase K/L (706 aa).

The THUMP domain maps to 43-154 (LLYQSLLWSR…RDMASVALDL (112 aa)).

This sequence belongs to the methyltransferase superfamily. RlmKL family.

The protein resides in the cytoplasm. It carries out the reaction guanosine(2445) in 23S rRNA + S-adenosyl-L-methionine = N(2)-methylguanosine(2445) in 23S rRNA + S-adenosyl-L-homocysteine + H(+). The catalysed reaction is guanosine(2069) in 23S rRNA + S-adenosyl-L-methionine = N(2)-methylguanosine(2069) in 23S rRNA + S-adenosyl-L-homocysteine + H(+). Functionally, specifically methylates the guanine in position 2445 (m2G2445) and the guanine in position 2069 (m7G2069) of 23S rRNA. The sequence is that of Ribosomal RNA large subunit methyltransferase K/L from Serratia proteamaculans (strain 568).